A 271-amino-acid chain; its full sequence is Tryptophan synthase alpha chain (271 aa).

Residues Glu49 and Asp60 each act as proton acceptor in the active site.

This sequence belongs to the TrpA family. Tetramer of two alpha and two beta chains.

It catalyses the reaction (1S,2R)-1-C-(indol-3-yl)glycerol 3-phosphate + L-serine = D-glyceraldehyde 3-phosphate + L-tryptophan + H2O. The protein operates within amino-acid biosynthesis; L-tryptophan biosynthesis; L-tryptophan from chorismate: step 5/5. Its function is as follows. The alpha subunit is responsible for the aldol cleavage of indoleglycerol phosphate to indole and glyceraldehyde 3-phosphate. The sequence is that of Tryptophan synthase alpha chain from Rhizorhabdus wittichii (strain DSM 6014 / CCUG 31198 / JCM 15750 / NBRC 105917 / EY 4224 / RW1) (Sphingomonas wittichii).